We begin with the raw amino-acid sequence, 278 residues long: Cation-dependent mannose-6-phosphate receptor (278 aa).

Positions Met-1–Ala-21 are cleaved as a signal peptide. Over Val-22 to Ser-188 the chain is Lumenal. The region spanning Lys-31–Pro-182 is the MRH domain. Cys-33 and Cys-79 are joined by a disulfide. N-linked (GlcNAc...) asparagine glycosylation is found at Asn-58, Asn-84, Asn-95, Asn-108, and Asn-114. 2 disulfide bridges follow: Cys-133-Cys-168 and Cys-146-Cys-180. Residues Val-189 to Phe-209 traverse the membrane as a helical segment. Over Leu-210–Met-278 the chain is Cytoplasmic. Positions Tyr-256–Met-278 are disordered. A Phosphoserine modification is found at Ser-268.

Homodimer. Binds GGA1, GGA2 and GGA3.

It localises to the lysosome membrane. Transport of phosphorylated lysosomal enzymes from the Golgi complex and the cell surface to lysosomes. Lysosomal enzymes bearing phosphomannosyl residues bind specifically to mannose-6-phosphate receptors in the Golgi apparatus and the resulting receptor-ligand complex is transported to an acidic prelyosomal compartment where the low pH mediates the dissociation of the complex. The protein is Cation-dependent mannose-6-phosphate receptor (M6pr) of Rattus norvegicus (Rat).